The sequence spans 106 residues: COX assembly mitochondrial protein homolog (106 aa).

Ala2 bears the N-acetylalanine mark. The CHCH domain occupies 28–71; it reads RERCSEQVEDFTRCCKDSGILMVLKCRKENSALKDCLTAYYNDP. Short sequence motifs (cx9C motif) lie at residues 31–41 and 53–63; these read CSEQVEDFTRC and CRKENSALKDC. Intrachain disulfides connect Cys31–Cys63 and Cys41–Cys53.

The protein belongs to the CMC family. Component of the MITRAC (mitochondrial translation regulation assembly intermediate of cytochrome c oxidase complex) complex, the core components of this complex being COA3/MITRAC12 and COX14.

Its subcellular location is the mitochondrion. In terms of biological role, component of the MITRAC (mitochondrial translation regulation assembly intermediate of cytochrome c oxidase complex) complex, that regulates cytochrome c oxidase assembly. The protein is COX assembly mitochondrial protein homolog (Cmc1) of Mus musculus (Mouse).